The sequence spans 87 residues: Putative defensin-like protein 304 (87 aa).

Residues 1–19 form the signal peptide; the sequence is MKSNKVTFFLGLFLVSAFC. 3 cysteine pairs are disulfide-bonded: C27-C46, C33-C51, and C40-C53.

The protein belongs to the DEFL family.

The protein resides in the secreted. The protein is Putative defensin-like protein 304 of Arabidopsis thaliana (Mouse-ear cress).